Here is a 234-residue protein sequence, read N- to C-terminus: Potassium/proton antiporter CemA (234 aa).

The next 4 helical transmembrane spans lie at Ile8–Leu28, Thr117–Leu137, Ile157–Ile177, and Ile193–Trp213.

Belongs to the CemA family.

The protein resides in the plastid. The protein localises to the chloroplast inner membrane. It catalyses the reaction K(+)(in) + H(+)(out) = K(+)(out) + H(+)(in). In terms of biological role, contributes to K(+)/H(+) antiport activity by supporting proton efflux to control proton extrusion and homeostasis in chloroplasts in a light-dependent manner to modulate photosynthesis. Prevents excessive induction of non-photochemical quenching (NPQ) under continuous-light conditions. Indirectly promotes efficient inorganic carbon uptake into chloroplasts. The sequence is that of Potassium/proton antiporter CemA from Citrus sinensis (Sweet orange).